The chain runs to 513 residues: ATP synthase subunit alpha (513 aa).

Residue Gly169–Thr176 coordinates ATP.

The protein belongs to the ATPase alpha/beta chains family. As to quaternary structure, F-type ATPases have 2 components, CF(1) - the catalytic core - and CF(0) - the membrane proton channel. CF(1) has five subunits: alpha(3), beta(3), gamma(1), delta(1), epsilon(1). CF(0) has three main subunits: a(1), b(2) and c(9-12). The alpha and beta chains form an alternating ring which encloses part of the gamma chain. CF(1) is attached to CF(0) by a central stalk formed by the gamma and epsilon chains, while a peripheral stalk is formed by the delta and b chains.

The protein localises to the cell inner membrane. It catalyses the reaction ATP + H2O + 4 H(+)(in) = ADP + phosphate + 5 H(+)(out). Produces ATP from ADP in the presence of a proton gradient across the membrane. The alpha chain is a regulatory subunit. This is ATP synthase subunit alpha from Haemophilus ducreyi (strain 35000HP / ATCC 700724).